The primary structure comprises 158 residues: Protein-export protein SecB (158 aa).

The protein belongs to the SecB family. Homotetramer, a dimer of dimers. One homotetramer interacts with 1 SecA dimer.

The protein localises to the cytoplasm. Functionally, one of the proteins required for the normal export of preproteins out of the cell cytoplasm. It is a molecular chaperone that binds to a subset of precursor proteins, maintaining them in a translocation-competent state. It also specifically binds to its receptor SecA. This Pectobacterium atrosepticum (strain SCRI 1043 / ATCC BAA-672) (Erwinia carotovora subsp. atroseptica) protein is Protein-export protein SecB.